The chain runs to 307 residues: tRNA pseudouridine synthase B (307 aa).

D48 (nucleophile) is an active-site residue.

It belongs to the pseudouridine synthase TruB family. Type 1 subfamily.

It catalyses the reaction uridine(55) in tRNA = pseudouridine(55) in tRNA. In terms of biological role, responsible for synthesis of pseudouridine from uracil-55 in the psi GC loop of transfer RNAs. This chain is tRNA pseudouridine synthase B, found in Neisseria meningitidis serogroup B (strain ATCC BAA-335 / MC58).